Consider the following 173-residue polypeptide: Mitochondrial import inner membrane translocase subunit TIM22-1 (173 aa).

A mitochondrion-targeting transit peptide spans 1 to 18; that stretch reads MADSSAAEPTTGASSPPV. The tract at residues 1–26 is disordered; the sequence is MADSSAAEPTTGASSPPVASDENSTQ. The next 4 membrane-spanning stretches (helical) occupy residues 52-72, 101-119, 128-144, and 151-168; these read VTSGVMGGGLGLMMGLFLGAL, SCKTFAVMGLVFSAAECIV, TVNTAIAGCVTGGSMSA, and ACIGCAGFATFSVLIEKF.

It belongs to the Tim17/Tim22/Tim23 family. In terms of tissue distribution, expressed in young cotyledons, roots, flowers and leaves.

Its subcellular location is the mitochondrion inner membrane. Its function is as follows. Essential core component of the TIM22 complex, a complex that mediates the import and insertion of multi-pass transmembrane proteins into the mitochondrial inner membrane. The polypeptide is Mitochondrial import inner membrane translocase subunit TIM22-1 (TIM22-1) (Arabidopsis thaliana (Mouse-ear cress)).